A 310-amino-acid chain; its full sequence is Carbamate kinase 1 (310 aa).

This sequence belongs to the carbamate kinase family.

It is found in the cytoplasm. The enzyme catalyses hydrogencarbonate + NH4(+) + ATP = carbamoyl phosphate + ADP + H2O + H(+). It functions in the pathway metabolic intermediate metabolism; carbamoyl phosphate degradation; CO(2) and NH(3) from carbamoyl phosphate: step 1/1. The chain is Carbamate kinase 1 (arcC1) from Staphylococcus aureus (strain MRSA252).